Here is a 180-residue protein sequence, read N- to C-terminus: Acireductone dioxygenase (180 aa).

The Fe(2+) site is built by histidine 97, histidine 99, glutamate 103, and histidine 141. Histidine 97, histidine 99, glutamate 103, and histidine 141 together coordinate Ni(2+).

Belongs to the acireductone dioxygenase (ARD) family. Monomer. Requires Fe(2+) as cofactor. Ni(2+) serves as cofactor.

It carries out the reaction 1,2-dihydroxy-5-(methylsulfanyl)pent-1-en-3-one + O2 = 3-(methylsulfanyl)propanoate + CO + formate + 2 H(+). The enzyme catalyses 1,2-dihydroxy-5-(methylsulfanyl)pent-1-en-3-one + O2 = 4-methylsulfanyl-2-oxobutanoate + formate + 2 H(+). It functions in the pathway amino-acid biosynthesis; L-methionine biosynthesis via salvage pathway; L-methionine from S-methyl-5-thio-alpha-D-ribose 1-phosphate: step 5/6. Functionally, catalyzes 2 different reactions between oxygen and the acireductone 1,2-dihydroxy-3-keto-5-methylthiopentene (DHK-MTPene) depending upon the metal bound in the active site. Fe-containing acireductone dioxygenase (Fe-ARD) produces formate and 2-keto-4-methylthiobutyrate (KMTB), the alpha-ketoacid precursor of methionine in the methionine recycle pathway. Ni-containing acireductone dioxygenase (Ni-ARD) produces methylthiopropionate, carbon monoxide and formate, and does not lie on the methionine recycle pathway. In Cronobacter sakazakii (strain ATCC BAA-894) (Enterobacter sakazakii), this protein is Acireductone dioxygenase.